The sequence spans 487 residues: Acetyl-coenzyme A carboxylase carboxyl transferase subunit beta, chloroplastic (487 aa).

A CoA carboxyltransferase N-terminal domain is found at 223 to 487 (LWIQCDNCYG…FCPLNKTEIK (265 aa)). The Zn(2+) site is built by Cys227, Cys230, Cys243, and Cys246. Residues 227 to 246 (CDNCYGLMYKKVKMNVCEQC) form a C4-type zinc finger.

The protein belongs to the AccD/PCCB family. As to quaternary structure, acetyl-CoA carboxylase is a heterohexamer composed of biotin carboxyl carrier protein, biotin carboxylase and 2 subunits each of ACCase subunit alpha and ACCase plastid-coded subunit beta (accD). Zn(2+) serves as cofactor.

Its subcellular location is the plastid. It is found in the chloroplast stroma. The enzyme catalyses N(6)-carboxybiotinyl-L-lysyl-[protein] + acetyl-CoA = N(6)-biotinyl-L-lysyl-[protein] + malonyl-CoA. Its pathway is lipid metabolism; malonyl-CoA biosynthesis; malonyl-CoA from acetyl-CoA: step 1/1. In terms of biological role, component of the acetyl coenzyme A carboxylase (ACC) complex. Biotin carboxylase (BC) catalyzes the carboxylation of biotin on its carrier protein (BCCP) and then the CO(2) group is transferred by the transcarboxylase to acetyl-CoA to form malonyl-CoA. This chain is Acetyl-coenzyme A carboxylase carboxyl transferase subunit beta, chloroplastic, found in Nasturtium officinale (Watercress).